Consider the following 651-residue polypeptide: tRNA uridine 5-carboxymethylaminomethyl modification enzyme MnmG (651 aa).

An FAD-binding site is contributed by 11-16; the sequence is GAGHAG. Residue 296–310 participates in NAD(+) binding; that stretch reads GPRYCPSIEDKIVRF.

The protein belongs to the MnmG family. Homodimer. Heterotetramer of two MnmE and two MnmG subunits. It depends on FAD as a cofactor.

It is found in the cytoplasm. Functionally, NAD-binding protein involved in the addition of a carboxymethylaminomethyl (cmnm) group at the wobble position (U34) of certain tRNAs, forming tRNA-cmnm(5)s(2)U34. In Chloroflexus aurantiacus (strain ATCC 29366 / DSM 635 / J-10-fl), this protein is tRNA uridine 5-carboxymethylaminomethyl modification enzyme MnmG.